The following is a 326-amino-acid chain: Ornithine carbamoyltransferase (326 aa).

Residues 54-57, glutamine 81, arginine 105, and 132-135 each bind carbamoyl phosphate; these read STRT and HPTQ. L-ornithine contacts are provided by residues asparagine 164, aspartate 225, and 229–230; that span reads SM. Carbamoyl phosphate-binding positions include 266-267 and arginine 311; that span reads CL.

This sequence belongs to the aspartate/ornithine carbamoyltransferase superfamily. OTCase family.

It is found in the cytoplasm. The catalysed reaction is carbamoyl phosphate + L-ornithine = L-citrulline + phosphate + H(+). It participates in amino-acid biosynthesis; L-arginine biosynthesis; L-arginine from L-ornithine and carbamoyl phosphate: step 1/3. Reversibly catalyzes the transfer of the carbamoyl group from carbamoyl phosphate (CP) to the N(epsilon) atom of ornithine (ORN) to produce L-citrulline. The polypeptide is Ornithine carbamoyltransferase (argF) (Streptococcus mutans serotype c (strain ATCC 700610 / UA159)).